The sequence spans 80 residues: Exodeoxyribonuclease 7 small subunit (80 aa).

This sequence belongs to the XseB family. As to quaternary structure, heterooligomer composed of large and small subunits.

Its subcellular location is the cytoplasm. It catalyses the reaction Exonucleolytic cleavage in either 5'- to 3'- or 3'- to 5'-direction to yield nucleoside 5'-phosphates.. Functionally, bidirectionally degrades single-stranded DNA into large acid-insoluble oligonucleotides, which are then degraded further into small acid-soluble oligonucleotides. This is Exodeoxyribonuclease 7 small subunit from Pseudomonas entomophila (strain L48).